The sequence spans 1159 residues: CRISPR-associated endoribonuclease Cas13a (1159 aa).

The tract at residues 1-11 is binds crRNA repeat and spacer; sequence MKVTKVGGISH. An NTD region spans residues 1–170; the sequence is MKVTKVGGIS…NNIEKVEGKS (170 aa). Binds crRNA repeat stretches follow at residues 139-151, 172-176, 224-233, 271-276, 294-297, and 301-305; these read NKINSLKYSFEKN, RNIIY, REFYHEIIGR, QVFYKY, HFVE, and SQLLK. A helical-1 region spans residues 171–360; it reads KRNIIYDYYR…YNYYLQDGEI (190 aa). Residues 319 to 328 are binds crRNA processing site; that stretch reads KIKRIFEYQN. Binds crRNA repeat regions lie at residues 336 to 340 and 371 to 378; these read KLLNK and QNEAFLRN. Residues 361 to 508 form an HEPN-like fold 1-I region; it reads ATSDFIARNR…SKKMFQNEIN (148 aa). Catalysis depends on for target RNA cleavage residues Arg472 and His477. Positions 509–751 are helical-2; it reads EKKLKLKIFR…EFLREIKLGN (243 aa). The tract at residues 519-522 is binds target RNA; sequence QLNS. The binds crRNA spacer stretch occupies residues 547 to 558; sequence NKNIPFVPSFTK. Residues 590-597 form a binds target RNA region; sequence DAQIYLLK. Positions 718 to 722 are binds crRNA spacer; sequence KQEFD. Residues 752-813 are HEPN-like fold 1-II; the sequence is ILKYTERLNM…NLDNNRVTED (62 aa). The binds crRNA repeat stretch occupies residues 780 to 783; it reads SLEK. The interval 804–810 is binds crRNA spacer and target RNA; it reads NLDNNRV. The tract at residues 814–946 is linker; sequence FELEADEIGK…EYTHLKNKVE (133 aa). Binds crRNA spacer regions lie at residues 845–857 and 938–942; these read KIYFDGENIIKHR and YTHLK. Positions 880–946 form a coiled coil; sequence YKISIEELKK…EYTHLKNKVE (67 aa). An HEPN-like fold 2 region spans residues 947-1159; that stretch reads FNELNLLQGL…YKMEEKKSEN (213 aa). The binds crRNA repeat stretch occupies residues 962–963; that stretch reads HR. Residues 995–998 form a binds 3'-end of target RNA, in adjacent protein region; it reads FENK. Residues Arg1048 and His1053 each act as for target RNA cleavage in the active site. 2 binds crRNA processing site regions span residues 1072 to 1082 and 1104 to 1108; these read RKLLSYDRKLK and IGADK.

This sequence belongs to the CRISPR-associated endoribonuclease Cas13a family. Crystals show the 3'-end of target RNA interacting with an adjacent protein molecule, and mutagenesis of those amino acid residues decreases target RNA cleavage, but it is not clear if this is physiological. It depends on a divalent metal cation as a cofactor.

With respect to regulation, target RNA acts as an activator for non-specific ssRNA cleavage; the target RNA and complementary crRNA must both be at least 20 nucleotides long to activate the HEPN-like catalytic pocket for RNase activity. In terms of biological role, CRISPR (clustered regularly interspaced short palindromic repeat), is an adaptive immune system that provides protection against mobile genetic elements (viruses, transposable elements and conjugative plasmids). CRISPR clusters contain sequences complementary to antecedent mobile elements (spacer sequences) and target invading nucleic acids. Unlike many single-component effectors, this CRISPR-Cas system targets RNA. CRISPR clusters are transcribed from pre-CRISPR RNA (crRNA) and processed into crRNA by this protein. pre-crRNA processing yields a 5'-OH and probably a 2',3'-cyclic phosphate. Also cleaves pre-crRNA from several other type VI-A CRISPR systems. Cleaves linear target ssRNA in a crRNA-dependent fashion, preferentially before U residues. Cleavage of target ssRNA is about 80-fold faster than pre-crRNA processing and uses a different active site. Binding a viable target RNA target activates this protein for non-specific RNA degradation in vitro (called collateral RNA degradation). Activation occurs with 10 fM target RNA. crRNA maturation is not essential for activation of RNA degradation, but lack of mature crRNA (due to mutagenesis) decreases activation levels. This system has a 3' protospacer flanking site in the target RNA (PFS), which is C and unavailable to base pair with crRNA (PFS is equivalent to PAM, the protospacer adjacent motif). The chain is CRISPR-associated endoribonuclease Cas13a from Leptotrichia buccalis (strain ATCC 14201 / DSM 1135 / JCM 12969 / NCTC 10249 / C-1013-b).